Consider the following 185-residue polypeptide: Ribosome-recycling factor (185 aa).

Residues 139-159 (IDSLEKDGDVSGDEADRAKKK) are disordered. Residues 141-159 (SLEKDGDVSGDEADRAKKK) show a composition bias toward basic and acidic residues.

This sequence belongs to the RRF family.

It localises to the cytoplasm. Responsible for the release of ribosomes from messenger RNA at the termination of protein biosynthesis. May increase the efficiency of translation by recycling ribosomes from one round of translation to another. The chain is Ribosome-recycling factor from Sorangium cellulosum (strain So ce56) (Polyangium cellulosum (strain So ce56)).